We begin with the raw amino-acid sequence, 286 residues long: Beta-glucanase (286 aa).

The N-terminal stretch at 1 to 30 is a signal peptide; sequence MCTMPLMKLKKMMRRTAFLLSVLIGCSMLG. The GH16 domain maps to 48 to 286; that stretch reads FDYSGLPDPE…DYVRVYRWVE (239 aa). Residue Glu158 is the Nucleophile of the active site. Catalysis depends on Glu163, which acts as the Proton donor.

It belongs to the glycosyl hydrolase 16 family.

The enzyme catalyses Hydrolysis of (1-&gt;4)-beta-D-glucosidic linkages in beta-D-glucans containing (1-&gt;3)- and (1-&gt;4)-bonds.. In terms of biological role, shows activity on lichenan, beta-glucan and laminarin but not on CMC cellulose or xylan. In Rhodothermus marinus (Rhodothermus obamensis), this protein is Beta-glucanase (bglA).